A 648-amino-acid polypeptide reads, in one-letter code: MAHMVRASSGLSYPERFYAAASYVGLDGSQSSVKQLSSKFSNDTSLLLYTLHQQATLGPCSIPKPSAWNPVEQSKWKSWQGLGTMPSIEAMRLFVKILEEADPGWYPRTSNSVLDPAVHVQINSTKAEPSFESGASFGETKTITSEDGRLTETQDKDVVLEDPDTVSVYNQWTAPRTSGQPPKARYQHGAAVIQDKMYMYGGNHNGRYLGDLHVLDLKNWTWSRVETKVVTGSQETSSPAKLTHCAGHSLIPWDNQLLSIGGHTKDPSESMPVMVFDLHCCSWSILKTYGKPPISRGGQSVTLVGKSLVIFGGQDAKRSLLNDLHILDLDTMTWEEIDAVGSPPTPRSDHAAAVHAERYLLIFGGGSHATCFDDLHVLDLQTMEWSRHTQQGDAPTPRAGHAGVTIGENWYIVGGGDNKSGASKTVVLNMSTLAWSVVTSVQEHVPLASEGLSLVVSSYNGEDIVVAFGGYNGHYNNEVNVLKPSHKSSLKSKIMGASAVPDSFSAVNNATTRDIESEIKVEGKADRIITTLKSEKEEVEASLNKEKIQTLQLKEELAEIDTRNTELYKELQSVRNQLAAEQSRCFKLEVEVAELRQKLQTMETLQKELELLQRQRAVASEQAATMNAKRQSSGGVWGWLAGTPPPKT.

Residues Y13–P107 enclose the ACB domain. An acyl-CoA-binding positions include K34, Y49–Q53, and K75. Kelch repeat units follow at residues K196–H244, Q256–K306, S307–E357, Y359–E408, N409–S457, and I464–N509. Position 517 is a phosphoserine (S517). The stretch at K520–S632 forms a coiled coil. Over residues T625–G634 the composition is skewed to polar residues. Residues T625–T648 form a disordered region.

This sequence belongs to the ACBP family. As to expression, expressed in roots, stems, leaves, flowers and siliques.

The protein localises to the cytoplasm. Functionally, binds medium- and long-chain acyl-CoA esters with very high affinity. Can interact in vitro with oleoyl-CoA, barely with palmitoyl-CoA, but not with arachidonyl-CoA. May function as an intracellular carrier of acyl-CoA esters. This is Acyl-CoA-binding domain-containing protein 5 (ACBP5) from Arabidopsis thaliana (Mouse-ear cress).